Here is a 210-residue protein sequence, read N- to C-terminus: Large ribosomal subunit protein uL4 (210 aa).

Residues 47–64 show a composition bias toward polar residues; sequence SRQGTRSQKSRSEVSGSN. Positions 47–83 are disordered; it reads SRQGTRSQKSRSEVSGSNKKPWRQKGTGRARSGSVKS.

It belongs to the universal ribosomal protein uL4 family. As to quaternary structure, part of the 50S ribosomal subunit.

One of the primary rRNA binding proteins, this protein initially binds near the 5'-end of the 23S rRNA. It is important during the early stages of 50S assembly. It makes multiple contacts with different domains of the 23S rRNA in the assembled 50S subunit and ribosome. Functionally, forms part of the polypeptide exit tunnel. This is Large ribosomal subunit protein uL4 from Blochmanniella pennsylvanica (strain BPEN).